A 168-amino-acid polypeptide reads, in one-letter code: Anti-sigma-F factor RsbW (168 aa).

The tract at residues 1–31 (MTDQLEDQTQGGSTVDRSLPGGCMADSDLPT) is disordered. A compositionally biased stretch (polar residues) spans 7–16 (DQTQGGSTVD). Residue 124–128 (PGSFS) participates in ATP binding.

It belongs to the anti-sigma-factor family. Homodimer.

Its function is as follows. A cognate anti-sigma factor for alternative sigma factor SigF. Alternative sigma factors are held in an inactive form by an anti-sigma factor. Binds ATP and GTP, may hydrolyze both. This Mycobacterium tuberculosis (strain CDC 1551 / Oshkosh) protein is Anti-sigma-F factor RsbW (rsbW).